Here is a 500-residue protein sequence, read N- to C-terminus: Cytochrome P450 monooxygenase 103 (500 aa).

2 consecutive transmembrane segments (helical) span residues 1–21 (MASTPLLYVLVIILSAVYLLR) and 26–46 (PLYAIPAVGPSLPLLSYIGAL). A glycan (N-linked (GlcNAc...) asparagine) is linked at N374. A heme-binding site is contributed by C441.

The protein belongs to the cytochrome P450 family. Heme is required as a cofactor.

It localises to the membrane. It functions in the pathway secondary metabolite biosynthesis. Functionally, cytochrome P450 monooxygenase that is able to use testosterone as a substrate for oxidation. The chain is Cytochrome P450 monooxygenase 103 from Postia placenta (strain ATCC 44394 / Madison 698-R) (Brown rot fungus).